Reading from the N-terminus, the 578-residue chain is Threonylcarbamoyladenosine tRNA methylthiotransferase (578 aa).

The MTTase N-terminal domain occupies glutamine 63–lysine 171. [4Fe-4S] cluster is bound by residues cysteine 72 and cysteine 108. Serine 121 is modified (phosphoserine). [4Fe-4S] cluster is bound by residues cysteine 137, cysteine 213, cysteine 217, and cysteine 220. The Radical SAM core domain maps to arginine 199–aspartate 430. In terms of domain architecture, TRAM spans aspartate 430 to serine 492. Residue threonine 498 is modified to Phosphothreonine. Residues cysteine 553 to phenylalanine 570 form a helical membrane-spanning segment.

This sequence belongs to the methylthiotransferase family. CDKAL1 subfamily. The cofactor is [4Fe-4S] cluster. As to expression, expressed in pancreas, liver and skeletal muscle, especially in white muscle fibers.

It localises to the endoplasmic reticulum membrane. It carries out the reaction N(6)-L-threonylcarbamoyladenosine(37) in tRNA + (sulfur carrier)-SH + AH2 + 2 S-adenosyl-L-methionine = 2-methylsulfanyl-N(6)-L-threonylcarbamoyladenosine(37) in tRNA + (sulfur carrier)-H + 5'-deoxyadenosine + L-methionine + A + S-adenosyl-L-homocysteine + 2 H(+). Its function is as follows. Catalyzes the methylthiolation of N6-threonylcarbamoyladenosine (t(6)A), leading to the formation of 2-methylthio-N6-threonylcarbamoyladenosine (ms(2)t(6)A) at position 37 in tRNAs that read codons beginning with adenine. This Mus musculus (Mouse) protein is Threonylcarbamoyladenosine tRNA methylthiotransferase (Cdkal1).